Here is a 533-residue protein sequence, read N- to C-terminus: Calcium/calmodulin-dependent protein kinase type II subunit delta (533 aa).

Ala-2 carries the post-translational modification N-acetylalanine. Residues 14–272 (YQLFEELGKG…ASEALKHPWI (259 aa)) form the Protein kinase domain. ATP-binding positions include 20–28 (LGKGAFSVV) and Lys-43. Asp-136 serves as the catalytic Proton acceptor. An autoinhibitory domain region spans residues 283–292 (HRQETVDCLK). Phosphothreonine; by autocatalysis is present on Thr-287. The interval 291 to 301 (LKKFNARRKLK) is calmodulin-binding. Phosphothreonine; by autocatalysis is present on residues Thr-306 and Thr-307. Position 315 is a phosphoserine (Ser-315). N6-acetyllysine is present on Lys-318. 2 positions are modified to phosphoserine: Ser-319 and Ser-364. Positions 337-375 (TSPKENIPTPALEPQTTVIHNPDGNKESTESSNTTIEDE) are disordered. Thr-365 carries the post-translational modification Phosphothreonine. Phosphoserine is present on Ser-367. Phosphothreonine is present on residues Thr-370 and Thr-371. A phosphoserine mark is found at Ser-438, Ser-524, and Ser-528.

This sequence belongs to the protein kinase superfamily. CAMK Ser/Thr protein kinase family. CaMK subfamily. As to quaternary structure, CAMK2 is composed of 4 different chains: alpha (CAMK2A), beta (CAMK2B), gamma (CAMK2G), and delta (CAMK2D). The different isoforms assemble into homo- or heteromultimeric holoenzymes composed of 12 subunits with two hexameric rings stacked one on top of the other. Interacts with RRAD and CACNB2. In terms of processing, autophosphorylation of Thr-287 following activation by Ca(2+)/calmodulin. Phosphorylation of Thr-287 locks the kinase into an activated state. As to expression, expressed in liver.

The protein resides in the cell membrane. It is found in the sarcolemma. The protein localises to the sarcoplasmic reticulum membrane. It catalyses the reaction L-seryl-[protein] + ATP = O-phospho-L-seryl-[protein] + ADP + H(+). The catalysed reaction is L-threonyl-[protein] + ATP = O-phospho-L-threonyl-[protein] + ADP + H(+). Its activity is regulated as follows. Activated by Ca(2+)/calmodulin. Binding of calmodulin results in conformational change that relieves intrasteric autoinhibition and allows autophosphorylation of Thr-287 which turns the kinase in a constitutively active form and confers to the kinase a Ca(2+)-independent activity. In terms of biological role, calcium/calmodulin-dependent protein kinase involved in the regulation of Ca(2+) homeostatis and excitation-contraction coupling (ECC) in heart by targeting ion channels, transporters and accessory proteins involved in Ca(2+) influx into the myocyte, Ca(2+) release from the sarcoplasmic reticulum (SR), SR Ca(2+) uptake and Na(+) and K(+) channel transport. Targets also transcription factors and signaling molecules to regulate heart function. In its activated form, is involved in the pathogenesis of dilated cardiomyopathy and heart failure. Contributes to cardiac decompensation and heart failure by regulating SR Ca(2+) release via direct phosphorylation of RYR2 Ca(2+) channel on 'Ser-2808'. In the nucleus, phosphorylates the MEF2 repressor HDAC4, promoting its nuclear export and binding to 14-3-3 protein, and expression of MEF2 and genes involved in the hypertrophic program. Is essential for left ventricular remodeling responses to myocardial infarction. In pathological myocardial remodeling acts downstream of the beta adrenergic receptor signaling cascade to regulate key proteins involved in ECC. Regulates Ca(2+) influx to myocytes by binding and phosphorylating the L-type Ca(2+) channel subunit beta-2 CACNB2. In addition to Ca(2+) channels, can target and regulate the cardiac sarcolemmal Na(+) channel Nav1.5/SCN5A and the K+ channel Kv4.3/KCND3, which contribute to arrhythmogenesis in heart failure. Phosphorylates phospholamban (PLN/PLB), an endogenous inhibitor of SERCA2A/ATP2A2, contributing to the enhancement of SR Ca(2+) uptake that may be important in frequency-dependent acceleration of relaxation (FDAR) and maintenance of contractile function during acidosis. May participate in the modulation of skeletal muscle function in response to exercise, by regulating SR Ca(2+) transport through phosphorylation of PLN/PLB and triadin, a ryanodine receptor-coupling factor. In response to interferon-gamma (IFN-gamma) stimulation, catalyzes phosphorylation of STAT1, stimulating the JAK-STAT signaling pathway. In Oryctolagus cuniculus (Rabbit), this protein is Calcium/calmodulin-dependent protein kinase type II subunit delta (CAMK2D).